A 536-amino-acid polypeptide reads, in one-letter code: UDP-glucuronosyltransferase 2A2 (536 aa).

Residues 1 to 15 are Cytoplasmic-facing; sequence MVSIRDFTMPKKFVQ. The chain crosses the membrane as a helical span at residues 16–36; sequence MLVFNLTLTEVVLSGNVLIWP. Residues 37-500 lie on the Lumenal side of the membrane; sequence TDGSHWLNIK…TWFQYHSLDV (464 aa). Asn58, Asn322, and Asn356 each carry an N-linked (GlcNAc...) asparagine glycan. A helical membrane pass occupies residues 501-521; sequence IGFLLVCVTTAIFLVIQCCLF. The Cytoplasmic portion of the chain corresponds to 522–536; sequence SCQKFGKIGKKKKRE.

It belongs to the UDP-glycosyltransferase family. As to expression, mainly expressed in the nasal mucosa.

The protein localises to the endoplasmic reticulum membrane. It carries out the reaction glucuronate acceptor + UDP-alpha-D-glucuronate = acceptor beta-D-glucuronoside + UDP + H(+). The enzyme catalyses 17alpha-estradiol + UDP-alpha-D-glucuronate = 17alpha-estradiol 3-O-(beta-D-glucuronate) + UDP + H(+). It catalyses the reaction 17beta-estradiol + UDP-alpha-D-glucuronate = 17beta-estradiol 3-O-(beta-D-glucuronate) + UDP + H(+). The catalysed reaction is chenodeoxycholate + UDP-alpha-D-glucuronate = chenodeoxycholoyl-24-O-(beta-D-glucuronate) + UDP. It carries out the reaction lithocholate + UDP-alpha-D-glucuronate = lithocholoyl-24-O-(beta-D-glucuronate) + UDP. The enzyme catalyses deoxycholate + UDP-alpha-D-glucuronate = deoxycholoyl-24-O-(beta-D-glucuronate) + UDP. It catalyses the reaction hyocholate + UDP-alpha-D-glucuronate = hyocholoyl-24-O-(beta-D-glucuronate) + UDP. The catalysed reaction is hyodeoxycholate + UDP-alpha-D-glucuronate = hyodeoxycholate 6-O-(beta-D-glucuronate) + UDP + H(+). UDP-glucuronosyltransferase (UGT) that catalyzes phase II biotransformation reactions in which lipophilic substrates are conjugated with glucuronic acid to increase the metabolite's water solubility, thereby facilitating excretion into either the urine or bile. Essential for the elimination and detoxification of drugs, xenobiotics and endogenous compounds. Catalyzes the glucuronidation of endogenous estrogen hormone estradiol. Contributes to bile acid (BA) detoxification by catalyzing the glucuronidation of BA substrates, which are natural detergents for dietary lipids absorption. Shows a potential role in detoxification of toxic waste compounds in the amniotic fluid before birth, and air-born chemical after birth. The chain is UDP-glucuronosyltransferase 2A2 from Homo sapiens (Human).